Consider the following 391-residue polypeptide: DNA-directed RNA polymerase subunit Rpo1C (391 aa).

It belongs to the RNA polymerase beta' chain family. Part of the RNA polymerase complex.

Its subcellular location is the cytoplasm. It is found in the chromosome. The enzyme catalyses RNA(n) + a ribonucleoside 5'-triphosphate = RNA(n+1) + diphosphate. Its function is as follows. DNA-dependent RNA polymerase (RNAP) catalyzes the transcription of DNA into RNA using the four ribonucleoside triphosphates as substrates. Forms part of the jaw domain. The sequence is that of DNA-directed RNA polymerase subunit Rpo1C from Thermococcus kodakarensis (strain ATCC BAA-918 / JCM 12380 / KOD1) (Pyrococcus kodakaraensis (strain KOD1)).